Consider the following 181-residue polypeptide: Small ribosomal subunit protein uS4 (181 aa).

The 65-residue stretch at 108-172 (RRLQTQVYRR…SPLVSDIHSE (65 aa)) folds into the S4 RNA-binding domain.

The protein belongs to the universal ribosomal protein uS4 family. As to quaternary structure, part of the 30S ribosomal subunit. Contacts protein S5. The interaction surface between S4 and S5 is involved in control of translational fidelity.

In terms of biological role, one of the primary rRNA binding proteins, it binds directly to 16S rRNA where it nucleates assembly of the body of the 30S subunit. Functionally, with S5 and S12 plays an important role in translational accuracy. The protein is Small ribosomal subunit protein uS4 of Methanospirillum hungatei JF-1 (strain ATCC 27890 / DSM 864 / NBRC 100397 / JF-1).